Here is a 464-residue protein sequence, read N- to C-terminus: Arylsulfatase (464 aa).

An N-terminal signal peptide occupies residues 1 to 20; sequence MNKKAMAAAVSMILAGGAHA. Ca(2+) is bound by residues D34, D35, and S72. S72 acts as the Nucleophile in catalysis. Position 72 is a 3-oxoalanine (Ser) (S72). H134 is an active-site residue. Residues D329 and N330 each contribute to the Ca(2+) site.

Belongs to the sulfatase family. Ca(2+) is required as a cofactor. In terms of processing, the conversion to 3-oxoalanine (also known as C-formylglycine, FGly), of a serine or cysteine residue in prokaryotes and of a cysteine residue in eukaryotes, is critical for catalytic activity.

The protein resides in the periplasm. It carries out the reaction an aryl sulfate + H2O = a phenol + sulfate + H(+). Functionally, plays an important role in the mineralization of sulfates. This Klebsiella aerogenes (Enterobacter aerogenes) protein is Arylsulfatase (atsA).